Here is a 472-residue protein sequence, read N- to C-terminus: Probable glycine dehydrogenase (decarboxylating) subunit 2 (472 aa).

K268 carries the post-translational modification N6-(pyridoxal phosphate)lysine.

The protein belongs to the GcvP family. C-terminal subunit subfamily. In terms of assembly, the glycine cleavage system is composed of four proteins: P, T, L and H. In this organism, the P 'protein' is a heterodimer of two subunits. Pyridoxal 5'-phosphate serves as cofactor.

It catalyses the reaction N(6)-[(R)-lipoyl]-L-lysyl-[glycine-cleavage complex H protein] + glycine + H(+) = N(6)-[(R)-S(8)-aminomethyldihydrolipoyl]-L-lysyl-[glycine-cleavage complex H protein] + CO2. Its function is as follows. The glycine cleavage system catalyzes the degradation of glycine. The P protein binds the alpha-amino group of glycine through its pyridoxal phosphate cofactor; CO(2) is released and the remaining methylamine moiety is then transferred to the lipoamide cofactor of the H protein. The polypeptide is Probable glycine dehydrogenase (decarboxylating) subunit 2 (Thermoplasma acidophilum (strain ATCC 25905 / DSM 1728 / JCM 9062 / NBRC 15155 / AMRC-C165)).